The following is a 231-amino-acid chain: Ribose-5-phosphate isomerase A (231 aa).

Substrate is bound by residues 32–35 (TGST), 85–88 (DGAD), and 98–101 (KGGG). The active-site Proton acceptor is the Glu107. Residue Lys125 coordinates substrate.

It belongs to the ribose 5-phosphate isomerase family. In terms of assembly, homodimer.

It carries out the reaction aldehydo-D-ribose 5-phosphate = D-ribulose 5-phosphate. It functions in the pathway carbohydrate degradation; pentose phosphate pathway; D-ribose 5-phosphate from D-ribulose 5-phosphate (non-oxidative stage): step 1/1. Its function is as follows. Catalyzes the reversible conversion of ribose-5-phosphate to ribulose 5-phosphate. The chain is Ribose-5-phosphate isomerase A from Burkholderia orbicola (strain MC0-3).